We begin with the raw amino-acid sequence, 96 residues long: Co-chaperonin GroES (96 aa).

It belongs to the GroES chaperonin family. Heptamer of 7 subunits arranged in a ring. Interacts with the chaperonin GroEL.

It localises to the cytoplasm. Together with the chaperonin GroEL, plays an essential role in assisting protein folding. The GroEL-GroES system forms a nano-cage that allows encapsulation of the non-native substrate proteins and provides a physical environment optimized to promote and accelerate protein folding. GroES binds to the apical surface of the GroEL ring, thereby capping the opening of the GroEL channel. In Methylobacterium radiotolerans (strain ATCC 27329 / DSM 1819 / JCM 2831 / NBRC 15690 / NCIMB 10815 / 0-1), this protein is Co-chaperonin GroES.